Consider the following 715-residue polypeptide: Eukaryotic peptide chain release factor GTP-binding subunit (715 aa).

Residues 1 to 12 are compositionally biased toward polar residues; the sequence is MANASLNGDQSK. 2 disordered regions span residues 1–148 and 168–262; these read MANA…SLNK and ATKK…SNSA. Residues 5 to 128 form a several sort of repeats region; the sequence is SLNGDQSKQQ…PQQQQQQQSQ (124 aa). The span at 13-25 shows a compositional bias: low complexity; the sequence is QQQQQQQQQQQQQ. Residues 26 to 37 show a composition bias toward polar residues; that stretch reads NYYNPNAAQSFV. Low complexity-rich tracts occupy residues 39–129 and 176–198; these read QGGY…QSQG and SKPQ…ASAP. A charged region spans residues 129-285; the sequence is GMSLADFQKQ…DEIDEEVVKD (157 aa). Composition is skewed to basic and acidic residues over residues 199–208 and 218–233; these read QEEKKEEKEA and ETKK…KKEA. Residues 290 to 515 form the tr-type G domain; sequence KDHVSIIFMG…YLDNMDTMNR (226 aa). The G1 stretch occupies residues 299 to 306; the sequence is GHVDAGKS. 299–306 is a binding site for GTP; it reads GHVDAGKS. Positions 355–359 are G2; the sequence is GKTIE. Phosphothreonine is present on Thr373. A G3 region spans residues 376–379; the sequence is DAPG. GTP contacts are provided by residues 376-380 and 438-441; these read DAPGH and NKMD. The G4 stretch occupies residues 438 to 441; it reads NKMD. The tract at residues 479 to 481 is G5; it reads SGY.

This sequence belongs to the TRAFAC class translation factor GTPase superfamily. Classic translation factor GTPase family. ERF3 subfamily.

The protein resides in the cytoplasm. Involved in translation termination. Stimulates the activity of ERF1. Binds guanine nucleotides. This Candida albicans (Yeast) protein is Eukaryotic peptide chain release factor GTP-binding subunit (SUP35).